The primary structure comprises 345 residues: Dihydroorotate dehydrogenase (quinone) (345 aa).

FMN-binding positions include 65–69 (AGLDK) and threonine 89. Lysine 69 is a substrate binding site. Residue 114-118 (NRMGF) coordinates substrate. FMN contacts are provided by asparagine 142 and asparagine 175. Substrate is bound at residue asparagine 175. The active-site Nucleophile is serine 178. Asparagine 180 contributes to the substrate binding site. 2 residues coordinate FMN: lysine 220 and threonine 248. Position 249–250 (249–250 (NT)) interacts with substrate. FMN contacts are provided by residues glycine 271, glycine 300, and 321-322 (YT).

This sequence belongs to the dihydroorotate dehydrogenase family. Type 2 subfamily. As to quaternary structure, monomer. It depends on FMN as a cofactor.

The protein resides in the cell membrane. The catalysed reaction is (S)-dihydroorotate + a quinone = orotate + a quinol. The protein operates within pyrimidine metabolism; UMP biosynthesis via de novo pathway; orotate from (S)-dihydroorotate (quinone route): step 1/1. In terms of biological role, catalyzes the conversion of dihydroorotate to orotate with quinone as electron acceptor. The protein is Dihydroorotate dehydrogenase (quinone) of Burkholderia ambifaria (strain ATCC BAA-244 / DSM 16087 / CCUG 44356 / LMG 19182 / AMMD) (Burkholderia cepacia (strain AMMD)).